A 454-amino-acid chain; its full sequence is Gastrin/cholecystokinin type B receptor (454 aa).

Topologically, residues 1 to 57 are extracellular; sequence MELLKPNRSVLGSGPGPGASLCRSGGPLLNGSGTGNLSCEPPRIRGAGTRELELAIR. N-linked (GlcNAc...) asparagine glycosylation is found at N7, N30, and N36. The helical transmembrane segment at 58–79 threads the bilayer; the sequence is VTLYAVIFLMSVGGNVLIIVVL. Over 80-87 the chain is Cytoplasmic; that stretch reads GLSRRLRT. Residues 88-109 traverse the membrane as a helical segment; sequence VTNAFLLSLAVSDLLLAVACMP. The Extracellular portion of the chain corresponds to 110 to 131; sequence FTLLPNLMGTFIFGTVVCKAVS. Cysteines 127 and 205 form a disulfide. A helical membrane pass occupies residues 132 to 150; it reads YFMGVSVSVSTLSLVAIAL. The Cytoplasmic segment spans residues 151-170; it reads ERYSAICRPLQARVWQTRSH. A helical membrane pass occupies residues 171-189; it reads AARVIVATWMLSGLLMVPY. Residues 190 to 219 lie on the Extracellular side of the membrane; it reads PVYTAVQPAGPRVLQCMHRWPSARVRQTWS. A helical transmembrane segment spans residues 220–242; that stretch reads VLLLLLLFFVPGVVMAVAYGLIS. The Cytoplasmic portion of the chain corresponds to 243–340; it reads RELYLGLRFD…KLLAKKRVVR (98 aa). Residues 257–284 form a disordered region; the sequence is SESQSRVGSQGGLPGGTGQGPAQANGRC. Positions 265 to 275 are enriched in gly residues; that stretch reads SQGGLPGGTGQ. Residues 341–362 traverse the membrane as a helical segment; the sequence is MLLVIVVLFFLCWLPVYSANTW. The Extracellular segment spans residues 363-380; sequence RAFDGPGAHRALSGAPIS. The chain crosses the membrane as a helical span at residues 381–401; the sequence is FIHLLTYASACVNPLVYCFMH. At 402–454 the chain is on the cytoplasmic side; that stretch reads RRFRQACLDTCTRCCPRPPRARPRPLPDEDPPTPSIASLSRLSYTTISTLGPG. C415 is lipidated: S-palmitoyl cysteine. Positions 422–441 are disordered; sequence ARPRPLPDEDPPTPSIASLS.

It belongs to the G-protein coupled receptor 1 family.

Its subcellular location is the cell membrane. In terms of biological role, receptor for gastrin and cholecystokinin. The CCK-B receptors occur throughout the central nervous system where they modulate anxiety, analgesia, arousal, and neuroleptic activity. This receptor mediates its action by association with G proteins that activate a phosphatidylinositol-calcium second messenger system. The chain is Gastrin/cholecystokinin type B receptor (CCKBR) from Bos taurus (Bovine).